We begin with the raw amino-acid sequence, 281 residues long: Diaminopimelate epimerase (281 aa).

Asparagine 13 and asparagine 66 together coordinate substrate. Cysteine 75 (proton donor) is an active-site residue. Substrate contacts are provided by residues 76–77, asparagine 164, asparagine 197, and 215–216; these read GN and ER. Cysteine 224 (proton acceptor) is an active-site residue. 225-226 is a substrate binding site; the sequence is GT.

Belongs to the diaminopimelate epimerase family. Homodimer.

It is found in the cytoplasm. The enzyme catalyses (2S,6S)-2,6-diaminopimelate = meso-2,6-diaminopimelate. Its pathway is amino-acid biosynthesis; L-lysine biosynthesis via DAP pathway; DL-2,6-diaminopimelate from LL-2,6-diaminopimelate: step 1/1. Functionally, catalyzes the stereoinversion of LL-2,6-diaminopimelate (L,L-DAP) to meso-diaminopimelate (meso-DAP), a precursor of L-lysine and an essential component of the bacterial peptidoglycan. This chain is Diaminopimelate epimerase, found in Picosynechococcus sp. (strain ATCC 27264 / PCC 7002 / PR-6) (Agmenellum quadruplicatum).